A 285-amino-acid chain; its full sequence is MGRSSKDKRDAYYRLAKEQGWRARSAFKLLQLNEQFNLFEGAKRVVDLCAAPGSWSQVLSRELLKNIDTSIAADEKPMIVAVDLQPMAPIDGVCTLQLDITHPNTLSIILSHFGNEPADLVVSDGAPDVTGLHDLDEYIQAQILLAAFNLAVCVLKPGGKFVAKIFRGRDVSLLYSQLRLMFRKVSCAKPRSSRASSIESFVVCEDFNPPSNFQPDLTKPLCVIDPTNAHEIAPFIACGDLDGYDADATYPVEINMKKATLDVIQPPTAPPYKRAIELKHSKMMS.

5 residues coordinate S-adenosyl-L-methionine: Gly53, Trp55, Asp83, Asp99, and Asp124. Lys164 serves as the catalytic Proton acceptor.

The protein belongs to the class I-like SAM-binding methyltransferase superfamily. RNA methyltransferase RlmE family. TRM7 subfamily.

The protein resides in the cytoplasm. It carries out the reaction cytidine(32)/guanosine(34) in tRNA + 2 S-adenosyl-L-methionine = 2'-O-methylcytidine(32)/2'-O-methylguanosine(34) in tRNA + 2 S-adenosyl-L-homocysteine + 2 H(+). Methylates the 2'-O-ribose of nucleotides at positions 32 and 34 of the tRNA anticodon loop of substrate tRNAs. Requires trm732 for methylation of the cytidine at position 32 of the anticodon loop of substrate tRNAs. Requires trm734 for methylation of the nucleotide at position 34 of the anticodon loop of substrate tRNAs. Methylates tRNA(Phe). This Schizosaccharomyces pombe (strain 972 / ATCC 24843) (Fission yeast) protein is tRNA (cytidine(32)/guanosine(34)-2'-O)-methyltransferase.